The following is a 574-amino-acid chain: Probable inactive serine/threonine-protein kinase slob2 (574 aa).

Residues 6 to 26 (YIIIAAVGGFAILTFIIIVVL) traverse the membrane as a helical segment. A Protein kinase domain is found at 166–346 (YADRGSLRDF…PLHRLTYTSR (181 aa)). Asn358 carries an N-linked (GlcNAc...) asparagine glycan. Residues 366 to 386 (SKPNSKDLSQPKLKDLKKQKK) are disordered. N-linked (GlcNAc...) asparagine glycans are attached at residues Asn440, Asn449, Asn453, Asn456, Asn464, Asn470, Asn477, and Asn483. Residues 450–493 (TTTNTTNTSTSSSLNSSFNSNVSTSYSNATTTTNTTSASSVSPP) are compositionally biased toward low complexity. Positions 450-574 (TTTNTTNTST…DKSGPLLKKS (125 aa)) are disordered. The span at 494–539 (ISSPPPPPPPPPPSKSSGPPPPPPPPPKSSGPPPPPPPKSSPPPPA) shows a compositional bias: pro residues. The segment covering 546 to 556 (LLSSIESFSSS) has biased composition (low complexity).

Belongs to the protein kinase superfamily. Ser/Thr protein kinase family.

It is found in the membrane. In Dictyostelium discoideum (Social amoeba), this protein is Probable inactive serine/threonine-protein kinase slob2 (slob2).